The sequence spans 329 residues: Cytosolic sulfotransferase 6 (329 aa).

74 to 79 (KCGTTW) lines the 3'-phosphoadenylyl sulfate pocket. H140 functions as the Proton acceptor in the catalytic mechanism. 3'-phosphoadenylyl sulfate contacts are provided by residues R162, S170, and 295–297 (RKG).

Belongs to the sulfotransferase 1 family.

The protein localises to the cytoplasm. In terms of biological role, sulfotransferase that utilizes 3'-phospho-5'-adenylyl sulfate (PAPS) as sulfonate donor. The protein is Cytosolic sulfotransferase 6 (SOT6) of Arabidopsis thaliana (Mouse-ear cress).